A 241-amino-acid chain; its full sequence is UPF0173 metal-dependent hydrolase Haur_4333 (241 aa).

The protein belongs to the UPF0173 family.

This Herpetosiphon aurantiacus (strain ATCC 23779 / DSM 785 / 114-95) protein is UPF0173 metal-dependent hydrolase Haur_4333.